The primary structure comprises 187 residues: Elongation factor P (187 aa).

This sequence belongs to the elongation factor P family.

Its subcellular location is the cytoplasm. It participates in protein biosynthesis; polypeptide chain elongation. In terms of biological role, involved in peptide bond synthesis. Stimulates efficient translation and peptide-bond synthesis on native or reconstituted 70S ribosomes in vitro. Probably functions indirectly by altering the affinity of the ribosome for aminoacyl-tRNA, thus increasing their reactivity as acceptors for peptidyl transferase. The chain is Elongation factor P from Desulfatibacillum aliphaticivorans.